The sequence spans 386 residues: MAFIHLDVGFLYTLLVCTAFGSMLSNAEIKVNPPQDFEIVDPGYLGYLSLQWQPPLFPDNFKECTIEYELKYRNIDSENWKTIITKNLHYKDGFDLNKGIEAKINTLLPAQCTNGSEVRSSWAETTYWTSPQGNRETKIQDMDCVYYNWQYLVCSWKPGMGVHFDTNYQLFYWYEGLDHSAECTDYIKVNGKNMGCRFPYLESSDYKDFYICVNGSSESQPIRPSYFIFQLQNIVKPMPPDYLSLTVKNSEEINLKWNMPKGPIPAKCFIYEIEFTEDGTTWVTTTVENEIQITRTSNESQKLCFLVRSKVNIYCSDDGIWSEWSDEQCWKGDIWKETLVFFLIPFAFVSIFVLVITCLLLYKQRALLKTIFHTKKEVFSHQDTFC.

The first 21 residues, 1 to 21, serve as a signal peptide directing secretion; that stretch reads MAFIHLDVGFLYTLLVCTAFG. Over 22–338 the chain is Extracellular; that stretch reads SMLSNAEIKV…CWKGDIWKET (317 aa). 3 consecutive Fibronectin type-III domains span residues 33–133, 138–234, and 239–338; these read PPQD…SPQG, KIQD…LQNI, and PPDY…WKET. Cysteine 64 and cysteine 112 are disulfide-bonded. An N-linked (GlcNAc...) asparagine glycan is attached at asparagine 114. 2 disulfide bridges follow: cysteine 144–cysteine 154 and cysteine 183–cysteine 196. Residues asparagine 214 and asparagine 298 are each glycosylated (N-linked (GlcNAc...) asparagine). Cysteine 268 and cysteine 315 are oxidised to a cystine. Positions 321-325 match the WSXWS motif motif; it reads WSEWS. A helical transmembrane segment spans residues 339–359; that stretch reads LVFFLIPFAFVSIFVLVITCL. At 360–386 the chain is on the cytoplasmic side; sequence LLYKQRALLKTIFHTKKEVFSHQDTFC.

Belongs to the type I cytokine receptor family. Type 5 subfamily. Interacts with IL4RA. Interacts with high affinity to interleukin-13 (IL13), but not to interleukin-4 (IL4). Post-translationally, cleaved by MMP8 leading to a soluble form that is also able to interact with IL13. As to expression, expressed in kidney, placenta, liver, skeletal muscle and thymus. Expression was not seen in whole blood and heart.

It is found in the cell membrane. Its function is as follows. Cell surface receptor that plays a role in the regulation of IL-13-mediated responses. Functions as a decoy receptor that inhibits IL-13- and IL-4-mediated signal transduction via the JAK-STAT pathway and thereby modulates immune responses and inflammation. Serves as a functional signaling receptor for IL-13 in an alternative pathway involving AP-1 ultimately leading to the production of TGFB1. The protein is Interleukin-13 receptor subunit alpha-2 (IL13RA2) of Canis lupus familiaris (Dog).